The sequence spans 528 residues: Chromosomal replication initiator protein DnaA (528 aa).

The segment at 1–104 is domain I, interacts with DnaA modulators; sequence MNDDPNALAR…PVDDEPESEA (104 aa). The disordered stretch occupies residues 93 to 159; that stretch reads AAPVDDEPES…DFEEVDDDSE (67 aa). Residues 104–123 show a composition bias toward basic and acidic residues; that stretch reads APSRERRPDPEPVHTPRHLE. Positions 105 to 187 are domain II; that stretch reads PSRERRPDPE…GPAPAATGGN (83 aa). Over residues 149–159 the composition is skewed to acidic residues; sequence TDFEEVDDDSE. The domain III, AAA+ region stretch occupies residues 188-404; that stretch reads SLNAKYTFDT…GALIRVTAFA (217 aa). Gly-232, Gly-234, Lys-235, and Thr-236 together coordinate ATP. The segment at 405 to 528 is domain IV, binds dsDNA; the sequence is SLNRQPLDLT…TARIKQRSKR (124 aa).

This sequence belongs to the DnaA family. As to quaternary structure, oligomerizes as a right-handed, spiral filament on DNA at oriC.

The protein resides in the cytoplasm. In terms of biological role, plays an essential role in the initiation and regulation of chromosomal replication. ATP-DnaA binds to the origin of replication (oriC) to initiate formation of the DNA replication initiation complex once per cell cycle. Binds the DnaA box (a 9 base pair repeat at the origin) and separates the double-stranded (ds)DNA. Forms a right-handed helical filament on oriC DNA; dsDNA binds to the exterior of the filament while single-stranded (ss)DNA is stabiized in the filament's interior. The ATP-DnaA-oriC complex binds and stabilizes one strand of the AT-rich DNA unwinding element (DUE), permitting loading of DNA polymerase. After initiation quickly degrades to an ADP-DnaA complex that is not apt for DNA replication. Binds acidic phospholipids. This is Chromosomal replication initiator protein DnaA from Rhodococcus opacus (strain B4).